Here is a 107-residue protein sequence, read N- to C-terminus: uncharacterized protein (107 aa).

A signal peptide spans 1–34 (MRLQWPKFITFLSTGSCCLLFLLLPCSFFPLPTA).

This is an uncharacterized protein from Saccharomyces cerevisiae (strain ATCC 204508 / S288c) (Baker's yeast).